A 206-amino-acid polypeptide reads, in one-letter code: MIKKVQHALILNELTKLRDKNTTTSQFRMALNQITSLLFFEATKQLPLATVEVETPFAKTKGYKLKNDIVLVPIMRAGLGMIDAIVRYSDKIRVGHLGIYRQTQTTSVISYYKKMPENISDSHVIILDPMLATGTTLLTAIKSIKEDKPIKISVIAIVAAPEGINKVEKMHPHVDIFLAAIDEKLNDNRYIIPGLGDAGDRLFGTK.

5-phospho-alpha-D-ribose 1-diphosphate-binding positions include Arg-76, Arg-101, and 128-136 (DPMLATGTT). Uracil-binding positions include Ile-191 and 196 to 198 (GDA). Asp-197 is a 5-phospho-alpha-D-ribose 1-diphosphate binding site.

The protein belongs to the UPRTase family. The cofactor is Mg(2+).

It carries out the reaction UMP + diphosphate = 5-phospho-alpha-D-ribose 1-diphosphate + uracil. The protein operates within pyrimidine metabolism; UMP biosynthesis via salvage pathway; UMP from uracil: step 1/1. Allosterically activated by GTP. In terms of biological role, catalyzes the conversion of uracil and 5-phospho-alpha-D-ribose 1-diphosphate (PRPP) to UMP and diphosphate. The polypeptide is Uracil phosphoribosyltransferase (Mycoplasma genitalium (strain ATCC 33530 / DSM 19775 / NCTC 10195 / G37) (Mycoplasmoides genitalium)).